The primary structure comprises 403 residues: Zinc finger CCHC domain-containing protein 3 (403 aa).

The interval 1–158 (MATGGGAEEE…PLQDEPAAAA (158 aa)) is disordered. Composition is skewed to basic and acidic residues over residues 26 to 38 (ARGE…REKM) and 47 to 65 (LAEK…REEE). Residues 67-79 (GGGGGSAGLGGPA) show a composition bias toward gly residues. A compositionally biased stretch (basic and acidic residues) spans 95–121 (GDPKGRRRDPAGEAVDPRKKKGAAEAG). The span at 128 to 139 (AAAAAMATPARP) shows a compositional bias: low complexity. Tyr201 bears the Phosphotyrosine mark. CCHC-type zinc fingers lie at residues 335–350 (CFKC…SCTQ), 352–368 (RCFR…YCRK), and 372–387 (CNLC…QCPK).

In terms of assembly, interacts with CGAS. Interacts with RIGI. Interacts with IFIH1/MDA5.

The protein localises to the cytoplasm. Its function is as follows. Nucleic acid-binding protein involved in innate immune response to DNA and RNA viruses. Binds DNA and RNA in the cytoplasm and acts by promoting recognition of viral nucleic acids by virus sensors, such as RIGI, IFIH1/MDA5 and CGAS. Acts as a co-sensor for recognition of double-stranded DNA (dsDNA) by cGAS in the cytoplasm, thereby playing a role in innate immune response to cytosolic dsDNA and DNA virus. Binds dsDNA and probably acts by promoting sensing of dsDNA by CGAS, leading to enhance CGAS oligomerization and activation. Promotes sensing of viral RNA by RIGI-like receptors proteins RIGI and IFIH1/MDA5 via two mechanisms: binds double-stranded RNA (dsRNA), enhancing the binding of RIGI and IFIH1/MDA5 to dsRNA and promotes 'Lys-63'-linked ubiquitination and subsequent activation of RIGI and IFIH1/MDA5. The sequence is that of Zinc finger CCHC domain-containing protein 3 from Homo sapiens (Human).